We begin with the raw amino-acid sequence, 259 residues long: Thiazole synthase (259 aa).

K95 acts as the Schiff-base intermediate with DXP in catalysis. 1-deoxy-D-xylulose 5-phosphate is bound by residues G156, 183 to 184, and 205 to 206; these read AG and NS.

This sequence belongs to the ThiG family. In terms of assembly, homotetramer. Forms heterodimers with either ThiH or ThiS.

The protein resides in the cytoplasm. The enzyme catalyses [ThiS sulfur-carrier protein]-C-terminal-Gly-aminoethanethioate + 2-iminoacetate + 1-deoxy-D-xylulose 5-phosphate = [ThiS sulfur-carrier protein]-C-terminal Gly-Gly + 2-[(2R,5Z)-2-carboxy-4-methylthiazol-5(2H)-ylidene]ethyl phosphate + 2 H2O + H(+). The protein operates within cofactor biosynthesis; thiamine diphosphate biosynthesis. Its function is as follows. Catalyzes the rearrangement of 1-deoxy-D-xylulose 5-phosphate (DXP) to produce the thiazole phosphate moiety of thiamine. Sulfur is provided by the thiocarboxylate moiety of the carrier protein ThiS. In vitro, sulfur can be provided by H(2)S. The polypeptide is Thiazole synthase (Coxiella burnetii (strain RSA 331 / Henzerling II)).